The following is a 42-amino-acid chain: KASYIHLRGSDLRPQFHQFTAVPHPNVKPMAYANALLQLGVM.

The required for autoinhibition stretch occupies residues 38-42 (QLGVM).

The protein belongs to the PPP phosphatase family. PP-5 (PP-T) subfamily. Probably forms a complex composed of chaperones HSP90 and HSP70, co-chaperones STIP1/HOP, CDC37, PPP5C, PTGES3/p23, TSC1 and client protein TSC2. Probably forms a complex composed of chaperones HSP90 and HSP70, co-chaperones CDC37, PPP5C, TSC1 and client protein TSC2, CDK4, AKT, RAF1 and NR3C1; this complex does not contain co-chaperones STIP1/HOP and PTGES3/p23. Part of a complex with HSP90/HSP90AA1 and steroid receptors. Interacts (via TPR repeats) with HSP90AA1 (via TPR repeat-binding motif) or HSPA1A/HSPA1B; the interaction is direct and activates the phosphatase activity. Dissociates from HSPA1A/HSPA1B and HSP90AA1 in response to arachidonic acid. Interacts with CPNE1 (via VWFA domain). Interacts with CDC16, CDC27. Interacts with KLHDC10 (via the 6 Kelch repeats); inhibits the phosphatase activity on MAP3K5. Interacts with ATM and ATR; both interactions are induced by DNA damage and enhance ATM and ATR kinase activity. Interacts with RAD17; reduced by DNA damage. Interacts with nuclear receptors such as NR3C1/GCR and PPARG (activated by agonist); regulates their transactivation activities. Interacts (via TPR repeats) with S100 proteins S100A1, S100A2, S100A6, S100B and S100P; the interactions are calcium-dependent, strongly activate PPP5C phosphatase activity and compete with HSP90AA1 and MAP3K5 interactions. Interacts with SMAD2 and SMAD3 but not with SMAD1; decreases SMAD3 phosphorylation and protein levels. Interacts (via TPR repeats) with CRY1 and CRY2; the interaction with CRY2 down-regulates the phosphatase activity on CSNK1E. Interacts (via TPR repeats) with the active form of RAC1, GNA12 or GNA13; these interactions activate the phosphatase activity and translocate PPP5C to the cell membrane. Interacts with FLCN. Mg(2+) serves as cofactor. Requires Mn(2+) as cofactor. Activated by at least two different proteolytic cleavages producing a 56 kDa and a 50 kDa form.

It is found in the nucleus. The protein resides in the cytoplasm. It localises to the cell membrane. It carries out the reaction O-phospho-L-seryl-[protein] + H2O = L-seryl-[protein] + phosphate. The catalysed reaction is O-phospho-L-threonyl-[protein] + H2O = L-threonyl-[protein] + phosphate. Its activity is regulated as follows. Autoinhibited. In the autoinhibited state, the TPR domain interacts with the catalytic region and prevents substrate access to the catalytic pocket. Allosterically activated by various polyunsaturated fatty acids, free long-chain fatty-acids and long-chain fatty acyl-CoA esters, arachidonic acid being the most effective activator. HSP90A and probably RAC1, GNA12 and GNA13 can also release the autoinhibition by the TPR repeat. Activation by RAC1, GNA12 and GNA13 is synergistic with the one produced by fatty acids binding. Inhibited by okadaic acid. Functionally, serine/threonine-protein phosphatase that dephosphorylates a myriad of proteins involved in different signaling pathways including the kinases CSNK1E, ASK1/MAP3K5, PRKDC and RAF1, the nuclear receptors NR3C1, PPARG, ESR1 and ESR2, SMAD proteins and TAU/MAPT. Implicated in wide ranging cellular processes, including apoptosis, differentiation, DNA damage response, cell survival, regulation of ion channels or circadian rhythms, in response to steroid and thyroid hormones, calcium, fatty acids, TGF-beta as well as oxidative and genotoxic stresses. Participates in the control of DNA damage response mechanisms such as checkpoint activation and DNA damage repair through, for instance, the regulation ATM/ATR-signaling and dephosphorylation of PRKDC and TP53BP1. Inhibits ASK1/MAP3K5-mediated apoptosis induced by oxidative stress. Plays a positive role in adipogenesis, mainly through the dephosphorylation and activation of PPARG transactivation function. Also dephosphorylates and inhibits the anti-adipogenic effect of NR3C1. Regulates the circadian rhythms, through the dephosphorylation and activation of CSNK1E. May modulate TGF-beta signaling pathway by the regulation of SMAD3 phosphorylation and protein expression levels. Dephosphorylates and may play a role in the regulation of TAU/MAPT. Through their dephosphorylation, may play a role in the regulation of ions channels such as KCNH2. Dephosphorylate FNIP1, disrupting interaction with HSP90AA1/Hsp90. The protein is Serine/threonine-protein phosphatase 5 (PPP5C) of Oryctolagus cuniculus (Rabbit).